A 149-amino-acid chain; its full sequence is Alpha-crystallin A chain (149 aa).

In terms of domain architecture, sHSP spans 28-138 (LLRGFMDSGI…SHSERPIPVS (111 aa)). Zn(2+) is bound by residues H55, H76, E78, H83, H91, and H130. Positions 125 to 149 (NLVSSHSERPIPVSREEKPTSAPSS) are disordered. The span at 130–143 (HSERPIPVSREEKP) shows a compositional bias: basic and acidic residues. S138 carries an O-linked (GlcNAc) serine glycan.

The protein belongs to the small heat shock protein (HSP20) family. As to quaternary structure, heteropolymer composed of three CRYAA and one CRYAB subunits. Inter-subunit bridging via zinc ions enhances stability, which is crucial as there is no protein turn over in the lens. Can also form homodimers and homotetramers (dimers of dimers) which serve as the building blocks of homooligomers. Within homooligomers, the zinc-binding motif is created from residues of 3 different molecules. His-76 and Glu-78 from one molecule are ligands of the zinc ion, and His-83 and His-130 residues from additional molecules complete the site with tetrahedral coordination geometry.

The protein resides in the cytoplasm. The protein localises to the nucleus. Contributes to the transparency and refractive index of the lens. May act as a chaperone, preventing aggregation of various proteins under a wide range of stress conditions. The sequence is that of Alpha-crystallin A chain (CRYAA) from Rana temporaria (European common frog).